We begin with the raw amino-acid sequence, 67 residues long: Putative sodium channel alpha-toxin Acra5 (67 aa).

Residues 2–65 form the LCN-type CS-alpha/beta domain; the sequence is RDGYIMIKDT…VYGDRGVICR (64 aa). 4 disulfides stabilise this stretch: Cys-13-Cys-64, Cys-17-Cys-40, Cys-26-Cys-45, and Cys-30-Cys-47. A propeptide (removed by a carboxypeptidase) is located at residue Arg-67.

It belongs to the long (4 C-C) scorpion toxin superfamily. Sodium channel inhibitor family. Alpha subfamily. Expressed by the venom gland.

The protein resides in the secreted. Functionally, alpha toxins bind voltage-independently at site-3 of sodium channels (Nav) and inhibit the inactivation of the activated channels, thereby blocking neuronal transmission. In Androctonus crassicauda (Arabian fat-tailed scorpion), this protein is Putative sodium channel alpha-toxin Acra5.